We begin with the raw amino-acid sequence, 223 residues long: Carnitine transport permease protein OpuCD (223 aa).

The 181-residue stretch at 22-202 (FWRHFLMSAY…VMAILADVLL (181 aa)) folds into the ABC transmembrane type-1 domain. The next 5 helical transmembrane spans lie at 27-47 (LMSA…GVYI), 63-83 (IIQT…MGLG), 87-107 (VVLS…YTGI), 148-168 (ALVI…GGLG), and 182-202 (AIIL…DVLL).

The protein belongs to the binding-protein-dependent transport system permease family. The complex is composed of two ATP-binding proteins (OpuCA), two transmembrane proteins (OpuCB and OpuCD) and a solute-binding protein (OpuCC).

The protein localises to the cell membrane. In terms of biological role, part of the ABC transporter complex OpuCABCD involved in carnitine uptake. Probably responsible for the translocation of the substrate across the membrane. Involved, with BetL and GbuABC, in osmoprotection and cryoprotection of Listeria. Can also mediate weak glycine betaine transport. This Listeria monocytogenes serotype 1/2a (strain 10403S) protein is Carnitine transport permease protein OpuCD (opuCD).